A 429-amino-acid chain; its full sequence is Z-DNA-binding protein 1 (429 aa).

Z-binding domains follow at residues 8 to 70 (PGRE…CLGG) and 103 to 166 (PQFS…TIYR). Residues 68–107 (LGGTDPEGEGPAELALSSPAERPQQHAATIPETPGPQFSQ) form a disordered region. 2 consecutive short sequence motifs (RIP homotypic interaction motif (RHIM)) follow at residues 195 to 219 (NSWI…RQTV) and 253 to 277 (DIHM…LHGV). Disordered stretches follow at residues 277 to 299 (VPSE…AAGP) and 339 to 429 (KMSI…GGGI). Over residues 347 to 358 (AGPGGVAGSGEG) the composition is skewed to gly residues. The segment covering 407-420 (KAAEGSHYVDEASH) has biased composition (basic and acidic residues).

In terms of assembly, homodimer. Interacts (via RIP homotypic interaction motif) with RIPK3; leading to RIPK3 activation and necroptosis; interaction is enhanced by CASP6. Interacts (via RIP homotypic interaction motif) with RIPK1. Component of the AIM2 PANoptosome complex, a multiprotein complex that drives inflammatory cell death (PANoptosis). (Microbial infection) Interacts (via RIP homotypic interaction motif/RHIM) with herpes simplex virus 1/HHV-1 protein RIR1/ICP6 (via RHIM); this interaction may induce heteromeric amyloid assemblies and prevent necroptosis activation. Interacts with human herpes simplex virus 1/HHV-1 protein ICP0. Post-translationally, phosphorylated. Highly expressed in lymphatic tissues including lymph node, leukocytes, tonsil, bone marrow and spleen. Expressed to a lesser extent in thymus, lung and liver.

Its subcellular location is the cytoplasm. The protein localises to the nucleus. ZBP1-dependent necroptosis is normally inhibited by RIPK1: RIPK1 inhibits the ZBP1-induced activation of RIPK3 via FADD-mediated recruitment of CASP8, which cleaves RIPK1 and limits TNF-induced necroptosis. Its function is as follows. Key innate sensor that recognizes and binds Z-RNA structures, which are produced by a number of viruses, such as herpesvirus, orthomyxovirus or flavivirus, and triggers different forms of cell death. ZBP1 acts as an essential mediator of pyroptosis, necroptosis and apoptosis (PANoptosis), an integral part of host defense against pathogens, by activating RIPK3, caspase-8 (CASP8), and the NLRP3 inflammasome. Key activator of necroptosis, a programmed cell death process in response to death-inducing TNF-alpha family members, via its ability to bind Z-RNA: once activated upon Z-RNA-binding, ZBP1 interacts and stimulates RIPK3 kinase, which phosphorylates and activates MLKL, triggering execution of programmed necrosis. In addition to TNF-induced necroptosis, necroptosis can also take place in the nucleus in response to orthomyxoviruses infection: ZBP1 recognizes and binds Z-RNA structures that are produced in infected nuclei by orthomyxoviruses, such as the influenza A virus (IAV), leading to ZBP1 activation, RIPK3 stimulation and subsequent MLKL phosphorylation, triggering disruption of the nuclear envelope and leakage of cellular DNA into the cytosol. ZBP1-dependent cell death in response to IAV infection promotes interleukin-1 alpha (IL1A) induction in an NLRP3-inflammasome-independent manner: IL1A expression is required for the optimal interleukin-1 beta (IL1B) production, and together, these cytokines promote infiltration of inflammatory neutrophils to the lung, leading to the formation of neutrophil extracellular traps. In addition to its direct role in driving necroptosis via its ability to sense Z-RNAs, also involved in PANoptosis triggered in response to bacterial infection: component of the AIM2 PANoptosome complex, a multiprotein complex that triggers PANoptosis. Also acts as the apical sensor of fungal infection responsible for activating PANoptosis. Involved in CASP8-mediated cell death via its interaction with RIPK1 but independently of its ability to sense Z-RNAs. In some cell types, also able to restrict viral replication by promoting cell death-independent responses. In response to Zika virus infection in neurons, promotes a cell death-independent pathway that restricts viral replication: together with RIPK3, promotes a death-independent transcriptional program that modifies the cellular metabolism via up-regulation expression of the enzyme ACOD1/IRG1 and production of the metabolite itaconate. Itaconate inhibits the activity of succinate dehydrogenase, generating a metabolic state in neurons that suppresses replication of viral genomes. Functionally, (Microbial infection) In case of herpes simplex virus 1/HHV-1 infection, forms hetero-amyloid structures with HHV-1 protein RIR1/ICP6 which may inhibit ZBP1-mediated necroptosis, thereby preventing host cell death pathway and allowing viral evasion. This Homo sapiens (Human) protein is Z-DNA-binding protein 1.